We begin with the raw amino-acid sequence, 270 residues long: NADPH-dependent 7-cyano-7-deazaguanine reductase (270 aa).

Residue 79–81 (IES) coordinates substrate. 81–82 (SK) is a binding site for NADPH. Cysteine 177 acts as the Thioimide intermediate in catalysis. The active-site Proton donor is aspartate 184. 216 to 217 (HE) is a substrate binding site. NADPH is bound at residue 245 to 246 (RG).

The protein belongs to the GTP cyclohydrolase I family. QueF type 2 subfamily. In terms of assembly, homodimer.

It is found in the cytoplasm. The catalysed reaction is 7-aminomethyl-7-carbaguanine + 2 NADP(+) = 7-cyano-7-deazaguanine + 2 NADPH + 3 H(+). Its pathway is tRNA modification; tRNA-queuosine biosynthesis. Functionally, catalyzes the NADPH-dependent reduction of 7-cyano-7-deazaguanine (preQ0) to 7-aminomethyl-7-deazaguanine (preQ1). The polypeptide is NADPH-dependent 7-cyano-7-deazaguanine reductase (Acinetobacter baumannii (strain SDF)).